The chain runs to 543 residues: Malate synthase (543 aa).

R162 (proton acceptor) is an active-site residue. The Proton donor role is filled by D449.

Belongs to the malate synthase family.

It carries out the reaction glyoxylate + acetyl-CoA + H2O = (S)-malate + CoA + H(+). It participates in carbohydrate metabolism; glyoxylate cycle; (S)-malate from isocitrate: step 2/2. This chain is Malate synthase (masA), found in Dictyostelium discoideum (Social amoeba).